The sequence spans 438 residues: GTPase Der (438 aa).

EngA-type G domains follow at residues 4–168 (PIVA…PEGN) and 177–352 (IRIA…GNYC). Residues 10–17 (GRPNVGKS), 57–61 (DTGGI), 120–123 (NKID), 183–190 (GRPNVGKS), 230–234 (DTAGL), and 295–298 (NKWD) each bind GTP. Positions 353-437 (KRIKTGILND…GIKLEFRERK (85 aa)) constitute a KH-like domain.

This sequence belongs to the TRAFAC class TrmE-Era-EngA-EngB-Septin-like GTPase superfamily. EngA (Der) GTPase family. Associates with the 50S ribosomal subunit.

GTPase that plays an essential role in the late steps of ribosome biogenesis. This Clostridium novyi (strain NT) protein is GTPase Der.